Consider the following 486-residue polypeptide: PTS system N-acetylmuramic acid-specific EIIBC component (486 aa).

The region spanning Met1–Gly89 is the PTS EIIB type-1 domain. Cys28 (phosphocysteine intermediate; for EIIB activity) is an active-site residue. In terms of domain architecture, PTS EIIC type-1 spans Ser127–Ser486. The next 10 helical transmembrane spans lie at Phe129 to Phe149, Leu170 to Gly190, Ala196 to Asn216, Phe230 to Ile250, Met268 to Met288, Ala312 to Val332, Leu347 to Phe367, Gly381 to Pro401, Ile411 to Gly431, and Ile453 to Leu473.

The protein resides in the cell inner membrane. The enzyme catalyses N-acetyl-beta-D-muramate(out) + N(pros)-phospho-L-histidyl-[protein] = N-acetyl-beta-D-muramate 6-phosphate(in) + L-histidyl-[protein]. In terms of biological role, the phosphoenolpyruvate-dependent sugar phosphotransferase system (sugar PTS), a major carbohydrate active transport system, catalyzes the phosphorylation of incoming sugar substrates concomitantly with their translocation across the cell membrane. This system is involved in N-acetylmuramic acid (MurNAc) transport, yielding cytoplasmic MurNAc-6-P. Is also able to take up anhydro-N-acetylmuramic acid (anhMurNAc), but cannot phosphorylate the carbon 6, probably because of the 1,6-anhydro ring. The chain is PTS system N-acetylmuramic acid-specific EIIBC component (murP) from Vibrio vulnificus (strain YJ016).